We begin with the raw amino-acid sequence, 460 residues long: Elongation factor 1-alpha (460 aa).

N,N,N-trimethylglycine is present on glycine 2. Lysine 3 carries the post-translational modification N6,N6-dimethyllysine; alternate. The residue at position 3 (lysine 3) is an N6-methyllysine; alternate. Residues 6–241 (KTHINVVVIG…DSIEPPKRPT (236 aa)) enclose the tr-type G domain. The G1 stretch occupies residues 15–22 (GHVDSGKS). Position 15–22 (15–22 (GHVDSGKS)) interacts with GTP. A G2 region spans residues 71 to 75 (GITID). Residue lysine 80 is modified to N6,N6,N6-trimethyllysine. Residues 92–95 (DAPG) are G3. GTP contacts are provided by residues 92-96 (DAPGH) and 154-157 (NKMD). The segment at 154 to 157 (NKMD) is G4. Residues 193 to 195 (SGF) are G5. The residue at position 317 (lysine 317) is an N6,N6-dimethyllysine; alternate. Position 317 is an N6-methyllysine; alternate (lysine 317). Position 391 is an N6-methyllysine (lysine 391).

Belongs to the TRAFAC class translation factor GTPase superfamily. Classic translation factor GTPase family. EF-Tu/EF-1A subfamily.

Its subcellular location is the cytoplasm. This protein promotes the GTP-dependent binding of aminoacyl-tRNA to the A-site of ribosomes during protein biosynthesis. The polypeptide is Elongation factor 1-alpha (tef1) (Hypocrea jecorina (Trichoderma reesei)).